We begin with the raw amino-acid sequence, 1483 residues long: MSNSNRKEITGLNRMTPKGLKELCKKDKLYQTPRLNDVLYLHYQGFQCIESLEEYTELKCLWLECNAISEIQGLEKLSKLKCLFLQNNLITKIENLDPCRELDTLNLSSNHIRKIQNIGTNVLPVLNTLTISSNYLKDSESLSDLIQCKTLSVLDLSNNRIDDILIVKIFEQMLNLKVLVLQGNPVVSRLPQYRKTLILACKELTYLDSRPVFPRDRACAEAWKRDGYEGERKENNRWNRAERRKTRESINCTIRMRNSHRPPDQQDPLLRSSDSEDDTCAETARKKVALENGCVDDLWEEVSGEQPISEDGTNSSSSLEDNDGTSSQDDLIAEKLSNRRTLEGRPTVLYETEVSNVKSANNDINIFEEGVGKASQIIIEDKPVTKIKLINEPSCMNDKSAMNCTSMGPVVKENDFDEDAEIKNVDDMVPCQNLIKSNEDINSEFGFSSKLKQDFDQTCTALRNDAECKEFDEELTIKESESKPFNEMYDIFAAEDDKLNETLDLNLNETTCPHHVHDNFFSEQNKMPSFYEEDIMINLLPKTKEKTLLEKDSIIENEKCAHDLDEMGRQMEEDLAELRQSTQNLIGISIDETARTDSETDEEDLIAQQDPYSPLLKQQFKDRRMKIMLTEETKAQEESLSDRNIALSNESDQDDKQDQLFAKILDDATENIPKRIFGTGCDALSSVWPQEECLLQLTLPENKESPAQEDTFKKSITNSTSFEKANEICVRMDQKMAEEEEALGKLLHDLEGEINNVYDINTKVKYEENTSTNESDAVSICTSLLDDIIVGLTFDEVLCHEKPKSFEFGLIESDEEFSYSFEPKLEKLVPPALEDPARGKSLRECLDTFSDFVSSMADPKLPVMLGRNPTSGVEKIRAAQELLKTKNLSDLYKDTAESLNSQVAKEIEKRKRRVAASATRCFNQRDKYDDTLELVENRLMIVKKDSGDLEELPPPPPLISDTESEDDNPTEDNYTPGNEVHRHGTKTQDSKEHLMSNLLNQNQDDIIEGKKNDSAEDEFYSLEAMTTFGNLDAEFFQKLDLQKVNASEDSEPAINCMRSYNELQAYMKSGSLNTQLNSEEAEMLQTMCSRVASDVDKPKSQNSKEEEEDDLLKKMVLRMKEYEEREHQLQLISHETSSELGPIKLSIGGSKLFEQNTKIPESVLVHSENEPTRNNKPINTKNTNDKESSDIMEKNGDPSVTTSFKTSHKSIDDDIQSDVSTDYESGEEVVVVEPPTLSEAVLKSFYSDEFEADSKMVHELEEATRRNLRRYNPNIMHISTSNHPFSTNNILPTKTSTSELSEGAKAKWAKIAERLHEFLDPETIANLNKEQFGESDECEDSQDDNITDITVEETNLKKDTKLVVLEEYNNTHTCDGNSCPSKLDDSDQFASLKGFEKIKETPTHNMGLSSVMSASQNKTSETLPNEIGNKITDFSSFKTSSTDLINSEGVKTEQIQCNLQILSDEGDVVVEELSVNAQVSSFK.

LRR repeat units lie at residues 34-56 (RLND…EEYT), 57-78 (ELKC…EKLS), 79-100 (KLKC…DPCR), 101-122 (ELDT…GTNV), 125-146 (VLNT…SDLI), and 150-171 (TLSV…KIFE). The LRRCT domain occupies 185–223 (PVVSRLPQYRKTLILACKELTYLDSRPVFPRDRACAEAW). Disordered regions lie at residues 249–282 (SINC…TCAE), 300–327 (EEVS…GTSS), 945–986 (DSGD…HGTK), and 1167–1213 (SENE…SIDD). Residues 311–327 (DGTNSSSSLEDNDGTSS) are compositionally biased toward polar residues. Basic and acidic residues predominate over residues 1183–1196 (TNDKESSDIMEKNG).

Belongs to the DNAAF1 family.

It is found in the cell projection. Its subcellular location is the cilium. Functionally, cilium-specific protein required for cilia structures. The sequence is that of Dynein axonemal assembly factor 1 homolog (dtr) from Drosophila melanogaster (Fruit fly).